Here is a 155-residue protein sequence, read N- to C-terminus: Cytochrome c-type biogenesis protein CcmE (155 aa).

Residues 1 to 8 are Cytoplasmic-facing; the sequence is MNPIRKKR. The chain crosses the membrane as a helical; Signal-anchor for type II membrane protein span at residues 9 to 29; sequence LYWILALLCGVSIAMALALSA. Residues 30–155 lie on the Periplasmic side of the membrane; that stretch reads LQENINLFYT…PKRVKQESTR (126 aa). The heme site is built by His124 and Tyr128.

This sequence belongs to the CcmE/CycJ family.

The protein localises to the cell inner membrane. Heme chaperone required for the biogenesis of c-type cytochromes. Transiently binds heme delivered by CcmC and transfers the heme to apo-cytochromes in a process facilitated by CcmF and CcmH. This Janthinobacterium sp. (strain Marseille) (Minibacterium massiliensis) protein is Cytochrome c-type biogenesis protein CcmE.